The primary structure comprises 299 residues: Class II hydrophobin C (299 aa).

The N-terminal stretch at 1-17 is a signal peptide; that stretch reads MKFLTVAAAIFASTSLA. Asparagine 39, asparagine 78, and asparagine 91 each carry an N-linked (GlcNAc...) asparagine glycan. 4 cysteine pairs are disulfide-bonded: cysteine 232–cysteine 281, cysteine 242–cysteine 272, cysteine 243–cysteine 255, and cysteine 282–cysteine 293.

Belongs to the cerato-ulmin hydrophobin family.

The protein resides in the secreted. Its subcellular location is the cell wall. The protein localises to the vacuole. It localises to the cytoplasmic vesicle. Its function is as follows. Aerial growth, conidiation, and dispersal of filamentous fungi in the environment rely upon a capability of their secreting small amphipathic proteins called hydrophobins (HPBs) with low sequence identity. Class I can self-assemble into an outermost layer of rodlet bundles on aerial cell surfaces, conferring cellular hydrophobicity that supports fungal growth, development and dispersal; whereas Class II form highly ordered films at water-air interfaces through intermolecular interactions but contribute nothing to the rodlet structure. Hyd2C contributes to certain cell wall-related features, such as hydrophobicity but is not involved in cell wall-related events during fungal proliferation in host hemocoel. Does not contribute to conidial hydrophobicity. Involved actively in the asexual development. This is Class II hydrophobin C from Beauveria bassiana (strain ARSEF 2860) (White muscardine disease fungus).